The sequence spans 93 residues: MPRSLKKGPFVDDHLLKKVDVQNSKGTKHVIKTWSRRSTVIPDMLGHTIAVHDGRKHVPVFITEGMVGHKLGEFAPTRTFRGHVKEDRRSRRG.

The protein belongs to the universal ribosomal protein uS19 family.

Functionally, protein S19 forms a complex with S13 that binds strongly to the 16S ribosomal RNA. The chain is Small ribosomal subunit protein uS19 from Frankia alni (strain DSM 45986 / CECT 9034 / ACN14a).